We begin with the raw amino-acid sequence, 391 residues long: NADH-quinone oxidoreductase subunit D (391 aa).

This sequence belongs to the complex I 49 kDa subunit family. NDH-1 is composed of 14 different subunits. Subunits NuoB, C, D, E, F, and G constitute the peripheral sector of the complex.

The protein localises to the cell inner membrane. The catalysed reaction is a quinone + NADH + 5 H(+)(in) = a quinol + NAD(+) + 4 H(+)(out). Its function is as follows. NDH-1 shuttles electrons from NADH, via FMN and iron-sulfur (Fe-S) centers, to quinones in the respiratory chain. The immediate electron acceptor for the enzyme in this species is believed to be ubiquinone. Couples the redox reaction to proton translocation (for every two electrons transferred, four hydrogen ions are translocated across the cytoplasmic membrane), and thus conserves the redox energy in a proton gradient. The sequence is that of NADH-quinone oxidoreductase subunit D from Rickettsia bellii (strain OSU 85-389).